Here is a 1220-residue protein sequence, read N- to C-terminus: DNA-directed RNA polymerase subunit beta' (1220 aa).

Residues Cys61, Cys63, Cys76, and Cys79 each contribute to the Zn(2+) site. Mg(2+)-binding residues include Asp450, Asp452, and Asp454. Positions 1197–1220 (QPEVEQEPTPDIPKLDDVAKSFEE) are disordered. A compositionally biased stretch (basic and acidic residues) spans 1209–1220 (PKLDDVAKSFEE).

The protein belongs to the RNA polymerase beta' chain family. As to quaternary structure, the RNAP catalytic core consists of 2 alpha, 1 beta, 1 beta' and 1 omega subunit. When a sigma factor is associated with the core the holoenzyme is formed, which can initiate transcription. It depends on Mg(2+) as a cofactor. Requires Zn(2+) as cofactor.

The catalysed reaction is RNA(n) + a ribonucleoside 5'-triphosphate = RNA(n+1) + diphosphate. In terms of biological role, DNA-dependent RNA polymerase catalyzes the transcription of DNA into RNA using the four ribonucleoside triphosphates as substrates. The polypeptide is DNA-directed RNA polymerase subunit beta' (Leuconostoc citreum (strain KM20)).